The following is a 194-amino-acid chain: RNA pyrophosphohydrolase (194 aa).

Residues 6–149 (GFRPNVGIIL…KRDVYQRALQ (144 aa)) form the Nudix hydrolase domain. Residues 38-59 (GGIKFGETPEQAMYRELEEEVG) carry the Nudix box motif. The segment at 158 to 194 (PTQHVPPQHNTARYLRQTHASRKPDEPSTEKTKPDNE) is disordered. Residues 179-194 (RKPDEPSTEKTKPDNE) show a composition bias toward basic and acidic residues.

This sequence belongs to the Nudix hydrolase family. RppH subfamily. A divalent metal cation is required as a cofactor.

Its function is as follows. Accelerates the degradation of transcripts by removing pyrophosphate from the 5'-end of triphosphorylated RNA, leading to a more labile monophosphorylated state that can stimulate subsequent ribonuclease cleavage. The chain is RNA pyrophosphohydrolase from Janthinobacterium sp. (strain Marseille) (Minibacterium massiliensis).